A 167-amino-acid chain; its full sequence is Endoribonuclease YbeY (167 aa).

The Zn(2+) site is built by His125, His129, and His135.

It belongs to the endoribonuclease YbeY family. The cofactor is Zn(2+).

Its subcellular location is the cytoplasm. Single strand-specific metallo-endoribonuclease involved in late-stage 70S ribosome quality control and in maturation of the 3' terminus of the 16S rRNA. The protein is Endoribonuclease YbeY of Allorhizobium ampelinum (strain ATCC BAA-846 / DSM 112012 / S4) (Agrobacterium vitis (strain S4)).